The chain runs to 352 residues: Holliday junction branch migration complex subunit RuvB (352 aa).

Residues 5 to 191 (TDDFSEQRVI…FGIVARLEFY (187 aa)) are large ATPase domain (RuvB-L). Residues L30, R31, G72, K75, T76, T77, 138–140 (EDY), R181, Y191, and R228 contribute to the ATP site. Residue T76 coordinates Mg(2+). Positions 192 to 262 (TPLELTRIVT…MADAALVMLD (71 aa)) are small ATPAse domain (RuvB-S). The tract at residues 265 to 352 (PVGFDVMDRK…GPNGELWGGQ (88 aa)) is head domain (RuvB-H). Positions 301, 320, and 325 each coordinate DNA.

This sequence belongs to the RuvB family. Homohexamer. Forms an RuvA(8)-RuvB(12)-Holliday junction (HJ) complex. HJ DNA is sandwiched between 2 RuvA tetramers; dsDNA enters through RuvA and exits via RuvB. An RuvB hexamer assembles on each DNA strand where it exits the tetramer. Each RuvB hexamer is contacted by two RuvA subunits (via domain III) on 2 adjacent RuvB subunits; this complex drives branch migration. In the full resolvosome a probable DNA-RuvA(4)-RuvB(12)-RuvC(2) complex forms which resolves the HJ.

The protein resides in the cytoplasm. The catalysed reaction is ATP + H2O = ADP + phosphate + H(+). In terms of biological role, the RuvA-RuvB-RuvC complex processes Holliday junction (HJ) DNA during genetic recombination and DNA repair, while the RuvA-RuvB complex plays an important role in the rescue of blocked DNA replication forks via replication fork reversal (RFR). RuvA specifically binds to HJ cruciform DNA, conferring on it an open structure. The RuvB hexamer acts as an ATP-dependent pump, pulling dsDNA into and through the RuvAB complex. RuvB forms 2 homohexamers on either side of HJ DNA bound by 1 or 2 RuvA tetramers; 4 subunits per hexamer contact DNA at a time. Coordinated motions by a converter formed by DNA-disengaged RuvB subunits stimulates ATP hydrolysis and nucleotide exchange. Immobilization of the converter enables RuvB to convert the ATP-contained energy into a lever motion, pulling 2 nucleotides of DNA out of the RuvA tetramer per ATP hydrolyzed, thus driving DNA branch migration. The RuvB motors rotate together with the DNA substrate, which together with the progressing nucleotide cycle form the mechanistic basis for DNA recombination by continuous HJ branch migration. Branch migration allows RuvC to scan DNA until it finds its consensus sequence, where it cleaves and resolves cruciform DNA. This chain is Holliday junction branch migration complex subunit RuvB, found in Herminiimonas arsenicoxydans.